Consider the following 217-residue polypeptide: 3,4-dihydroxy-2-butanone 4-phosphate synthase (217 aa).

Residues 37 to 38 (RE), D42, 150 to 154 (RRGHT), and E174 contribute to the D-ribulose 5-phosphate site. E38 is a Mg(2+) binding site. Position 153 (H153) interacts with Mg(2+).

It belongs to the DHBP synthase family. As to quaternary structure, homodimer. The cofactor is Mg(2+). Mn(2+) is required as a cofactor.

It catalyses the reaction D-ribulose 5-phosphate = (2S)-2-hydroxy-3-oxobutyl phosphate + formate + H(+). The protein operates within cofactor biosynthesis; riboflavin biosynthesis; 2-hydroxy-3-oxobutyl phosphate from D-ribulose 5-phosphate: step 1/1. In terms of biological role, catalyzes the conversion of D-ribulose 5-phosphate to formate and 3,4-dihydroxy-2-butanone 4-phosphate. The sequence is that of 3,4-dihydroxy-2-butanone 4-phosphate synthase from Shewanella sp. (strain MR-4).